The following is a 495-amino-acid chain: Neuronal acetylcholine receptor subunit beta-4 (495 aa).

Residues 1-20 (MRGTPLLLVSLFALLQPGDC) form the signal peptide. Over 21–235 (RLANAEEKLM…IIKRKPLFYT (215 aa)) the chain is Extracellular. Residues N35, N92, N137, and N165 are each glycosylated (N-linked (GlcNAc...) asparagine). C152 and C166 are joined by a disulfide. Residues 236–256 (INLIIPCVLITSLAILVFYLP) traverse the membrane as a helical segment. Topologically, residues 257-264 (SDCGEKMT) are cytoplasmic. E261 lines the Na(+) pocket. A helical transmembrane segment spans residues 265–285 (LCISVLLALTFFLLLISKIVP). The Extracellular portion of the chain corresponds to 286–297 (PTSLDIPLIGKY). A helical transmembrane segment spans residues 298-318 (LLFTMVLVTFSIVTTVCVLNV). At 319 to 463 (HHRSPSTHTM…WKFVAMVVDR (145 aa)) the chain is on the cytoplasmic side. A helical transmembrane segment spans residues 464-484 (LFLWVFVIVCILGTMGLFLPP). The Extracellular segment spans residues 485–495 (LFQIHAPSKGL).

It belongs to the ligand-gated ion channel (TC 1.A.9) family. Acetylcholine receptor (TC 1.A.9.1) subfamily. Beta-4/CHRNB4 sub-subfamily. Neuronal AChR is composed of two different types of subunits: alpha and beta. CHRNB4/Beta-4 subunit can be combined to CHRNA2/alpha-2, CHRNA3/alpha-3 or CHRNA4/alpha-4, CHRNA5/alpha-5 and CHRNB3/beta-3 to give rise to functional receptors. Forms stoichiometries such as (CHRNA3)2:(CHRNB4)3 or (CHRNA3:CHRNB4)2:CHRNB3. Interacts with RIC3; which is required for proper folding and assembly. Interacts with LYPD6. As to expression, predominantly expressed by immature T-cells in the thymus.

It is found in the synaptic cell membrane. Its subcellular location is the cell membrane. It catalyses the reaction K(+)(in) = K(+)(out). The catalysed reaction is Na(+)(in) = Na(+)(out). The enzyme catalyses Ca(2+)(in) = Ca(2+)(out). Its activity is regulated as follows. Activated by a myriad of ligands such as acetylcholine, cytisine, nicotine, choline and epibatidine. The heteropentamer CHRNA3:CHRNB4 activity is blocked by the alpha-conotoxin ImI and AuIB. Functionally, component of neuronal acetylcholine receptors (nAChRs) that function as pentameric, ligand-gated cation channels with high calcium permeability among other activities. nAChRs are excitatory neurotrasnmitter receptors formed by a collection of nAChR subunits known to mediate synaptic transmission in the nervous system and the neuromuscular junction. Each nAchR subunit confers differential attributes to channel properties, including activation, deactivation and desensitization kinetics, pH sensitivity, cation permeability, and binding to allosteric modulators. CHRNB4 forms heteropentameric neuronal acetylcholine receptors with CHRNA2, CHRNA3 and CHRNA4, as well as CHRNA5 and CHRNB3 as accesory subunits. CHRNA3:CHRNB4 being predominant in neurons of the autonomic ganglia, it is known as ganglionic nicotinic receptor. CHRNA3:CHRNB4 or CHRNA3:CHRNA5:CHRNB4 play also an important role in the habenulo-interpeduncular tract, modulating the mesolimbic dopamine system and affecting reward circuits and addiction. Hypothalamic CHRNA3:CHRNB4 nAChR activation by nicotine leads to activation of POMC neurons and a decrease in food intake. The sequence is that of Neuronal acetylcholine receptor subunit beta-4 (Chrnb4) from Mus musculus (Mouse).